The following is a 248-amino-acid chain: Adenosylcobinamide-GDP ribazoletransferase (248 aa).

Transmembrane regions (helical) follow at residues 36 to 56 (FFLPVVASIIGGMEFLIYLGL), 59 to 79 (FLPPNVIIVLLLLFTAMITGG), 113 to 133 (FGTIAMIINLLLKYQLLYSLV), 137 to 157 (CSIAIILAPVIGRISILFLCL), 170 to 190 (IFIGNMSKPIIFLITIIALAM), and 199 to 219 (ITIISFTAVLIITYLFYLLCL).

Belongs to the CobS family. Mg(2+) serves as cofactor.

Its subcellular location is the cell membrane. It carries out the reaction alpha-ribazole + adenosylcob(III)inamide-GDP = adenosylcob(III)alamin + GMP + H(+). The enzyme catalyses alpha-ribazole 5'-phosphate + adenosylcob(III)inamide-GDP = adenosylcob(III)alamin 5'-phosphate + GMP + H(+). The protein operates within cofactor biosynthesis; adenosylcobalamin biosynthesis; adenosylcobalamin from cob(II)yrinate a,c-diamide: step 7/7. Its function is as follows. Joins adenosylcobinamide-GDP and alpha-ribazole to generate adenosylcobalamin (Ado-cobalamin). Also synthesizes adenosylcobalamin 5'-phosphate from adenosylcobinamide-GDP and alpha-ribazole 5'-phosphate. This is Adenosylcobinamide-GDP ribazoletransferase from Clostridium botulinum (strain 657 / Type Ba4).